The chain runs to 446 residues: Nuclear envelope morphology protein 1 (446 aa).

Residues 53–80 form a disordered region; that stretch reads VDQQYDHSSSHLKESDQNQERKNSVPKK. Residues 56–75 show a composition bias toward basic and acidic residues; the sequence is QYDHSSSHLKESDQNQERKN. A helical transmembrane segment spans residues 87-103; the sequence is ILIEKIASILWALLLFL. The interval 132 to 168 is disordered; sequence HTDKRNRGSNASENELPVSSSNINDSSEKTNPKNCNL. The span at 139-156 shows a compositional bias: polar residues; it reads GSNASENELPVSSSNIND. Residues 247–424 enclose the FCP1 homology domain; that stretch reads NTQKKKKLVI…LNLLPFLEAM (178 aa).

It belongs to the Dullard family. As to quaternary structure, component of the NEM1-SPO7 complex.

The protein localises to the endoplasmic reticulum membrane. It localises to the nucleus membrane. It carries out the reaction O-phospho-L-seryl-[protein] + H2O = L-seryl-[protein] + phosphate. The enzyme catalyses O-phospho-L-threonyl-[protein] + H2O = L-threonyl-[protein] + phosphate. Catalytic component of the NEM1-SPO7 complex which acts as a phosphatase and dephosphorylates the phosphatidic acid phosphohydrolase PAH1. Essential for the formation of a spherical nucleus and meiotic division. The NEM1-SPOo7 protein phosphatase is required for efficient mitophagy under prolonged respiration, as well as for reticulophagy and pexophagy. This Saccharomyces cerevisiae (strain ATCC 204508 / S288c) (Baker's yeast) protein is Nuclear envelope morphology protein 1 (NEM1).